The following is a 102-amino-acid chain: Large ribosomal subunit protein uL24 (102 aa).

It belongs to the universal ribosomal protein uL24 family. Part of the 50S ribosomal subunit.

In terms of biological role, one of two assembly initiator proteins, it binds directly to the 5'-end of the 23S rRNA, where it nucleates assembly of the 50S subunit. Functionally, one of the proteins that surrounds the polypeptide exit tunnel on the outside of the subunit. This is Large ribosomal subunit protein uL24 from Paraburkholderia phytofirmans (strain DSM 17436 / LMG 22146 / PsJN) (Burkholderia phytofirmans).